The following is a 439-amino-acid chain: Methionine aminopeptidase 2-2 (439 aa).

The tract at residues 1 to 90 (MAAQTTEKLD…RVPVSNLFPN (90 aa)) is disordered. Residues 28–41 (EAEEDSDDAQDEGA) show a composition bias toward acidic residues. Residues 56–72 (KKKKKKKPKKKSKKKGG) are compositionally biased toward basic residues. Residue His196 participates in substrate binding. 3 residues coordinate a divalent metal cation: Asp216, Asp227, and His296. Substrate is bound at residue His304. Glu329 and Glu424 together coordinate a divalent metal cation.

This sequence belongs to the peptidase M24A family. Methionine aminopeptidase eukaryotic type 2 subfamily. It depends on Co(2+) as a cofactor. Zn(2+) serves as cofactor. The cofactor is Mn(2+). Requires Fe(2+) as cofactor.

It localises to the cytoplasm. It carries out the reaction Release of N-terminal amino acids, preferentially methionine, from peptides and arylamides.. Functionally, cotranslationally removes the N-terminal methionine from nascent proteins. The N-terminal methionine is often cleaved when the second residue in the primary sequence is small and uncharged (Met-Ala-, Cys, Gly, Pro, Ser, Thr, or Val). The sequence is that of Methionine aminopeptidase 2-2 from Penicillium rubens (strain ATCC 28089 / DSM 1075 / NRRL 1951 / Wisconsin 54-1255) (Penicillium chrysogenum).